A 235-amino-acid chain; its full sequence is Transcription factor MYB59 (235 aa).

HTH myb-type domains are found at residues 5–57 (QEEY…VNYL) and 58–112 (HPGL…RKKA). The segment at residues 33–57 (WDFVAKVSGLNRTGKSCRLRWVNYL) is a DNA-binding region (H-T-H motif). Residues 62–65 (KRGK) carry the Bipartite nuclear localization signal 1 motif. Residues 85-108 (WSKIARKLPGRTDNEIKNYWRTHM) constitute a DNA-binding region (H-T-H motif). A Bipartite nuclear localization signal 2 motif is present at residues 109-117 (RKKAQEKKR). Residues 109–147 (RKKAQEKKRPMSPTSSSSNCCSSSMTTTTSQDTGGSNGK) are disordered. Over residues 119 to 138 (MSPTSSSSNCCSSSMTTTTS) the composition is skewed to low complexity.

As to expression, mainly expressed in leaves and seedlings, and to a lower extent, in roots, stems and inflorescences. Isoform MYB59-1 and isoform MYB59-2 are present in roots, leaves, and seedlings, while the expression of isoform MYB59-3 and isoform MYB59-4 is confined to seedlings.

Its subcellular location is the nucleus. Functionally, transcription factor. The sequence is that of Transcription factor MYB59 (MYB59) from Arabidopsis thaliana (Mouse-ear cress).